Reading from the N-terminus, the 385-residue chain is Single-stranded DNA-binding protein 4 (385 aa).

Met1 carries the post-translational modification N-acetylmethionine. A LisH domain is found at 17–49; sequence AREKLALYVYEYLLHIGAQKSAQTFLSEIRWEK. Disordered regions lie at residues 122-287 and 331-363; these read FQGP…NSSE and GSGDMDGLPKSSPGAVAGLSNAPGTPRDDGEMA. Residues 245 to 263 show a composition bias toward low complexity; sequence SPSGNSIPYSSSSPGSYTG. Positions 267-277 are enriched in pro residues; it reads GGGPPGTPIMP. Ser341 carries the post-translational modification Phosphoserine. Thr355 carries the phosphothreonine modification.

It is found in the nucleus. This chain is Single-stranded DNA-binding protein 4 (SSBP4), found in Homo sapiens (Human).